The chain runs to 147 residues: Large-conductance mechanosensitive channel (147 aa).

The next 2 helical transmembrane spans lie at 8-28 (FIMK…AAFG) and 81-101 (GIFL…FMII).

Belongs to the MscL family. In terms of assembly, homopentamer.

The protein localises to the cell inner membrane. Functionally, channel that opens in response to stretch forces in the membrane lipid bilayer. May participate in the regulation of osmotic pressure changes within the cell. The protein is Large-conductance mechanosensitive channel of Trichlorobacter lovleyi (strain ATCC BAA-1151 / DSM 17278 / SZ) (Geobacter lovleyi).